The chain runs to 715 residues: Lactococcin-A transport/processing ATP-binding protein LcnC (715 aa).

The Peptidase C39 domain maps to 11 to 138 (QVDEMDCGCA…SEWTGISLFL (128 aa)). Cys-17 is a catalytic residue. The next 6 helical transmembrane spans lie at 167–187 (VILNIVIASFIVTLINILGSY), 197–217 (IPNALMGTLGIISVGLLLTYI), 237–257 (LAIDVILSYIRHIFQLPMSFF), 282–302 (TILSLFLDLTIVVMTGLILGL), 307–327 (LFLLVLLAIPLYIVVIIIFTP), and 396–416 (AIIQLTLSVTILWFGATLVIS). Residues 168–450 (ILNIVIASFI…IINLQTKLQK (283 aa)) enclose the ABC transmembrane type-1 domain. Residues 482–715 (LNMSDISYQY…NGFYEQLYHN (234 aa)) form the ABC transporter domain. 515-522 (GMSGSGKS) is a binding site for ATP.

The protein belongs to the ABC transporter superfamily. Bacteriocin (lactococcin) exporter (TC 3.A.1.112.3) family.

It localises to the cell membrane. Its function is as follows. Involved in the export process of the bacteriocin lactococcin A. The polypeptide is Lactococcin-A transport/processing ATP-binding protein LcnC (lcnC) (Lactococcus lactis subsp. lactis (Streptococcus lactis)).